Consider the following 799-residue polypeptide: Oligopeptide transporter 1 (799 aa).

2 disordered regions span residues 1-26 (MSTI…PIQI) and 43-64 (DVNN…QKFD). Residues 1 to 108 (MSTIYRESDS…DPTIRLNHWR (108 aa)) are Extracellular-facing. Residues 13–26 (SEPSPTPTTIPIQI) show a composition bias toward low complexity. N-linked (GlcNAc...) asparagine glycosylation is present at Asn-46. Phosphothreonine is present on residues Thr-48, Thr-50, and Thr-51. Residues 109 to 129 (TWFLTTVFVVVFAGVNQFFSL) traverse the membrane as a helical segment. At 130–135 (RYPSLE) the chain is on the cytoplasmic side. A helical transmembrane segment spans residues 136-156 (INFLVAQVVCYPIGRILALLP). Residues 157–177 (DWKCSKVPFFDLNPGPFTKKE) lie on the Extracellular side of the membrane. Residues 178–198 (HAVVTIAVALTSSTAYAMYIL) traverse the membrane as a helical segment. Over 199–210 (NAQGSFYNMKLN) the chain is Cytoplasmic. Residues 211-231 (VGYQFLLVWTSQMIGYGAAGL) traverse the membrane as a helical segment. Over 232–276 (TRRWVVNPASSIWPQTLISVSLFDSLHSRKVEKTVANGWTMPRYR) the chain is Extracellular. Residues 277–297 (FFLIVLIGSFIWYWVPGFLFT) traverse the membrane as a helical segment. Topologically, residues 298-313 (GLSYFNVILWGSKTRH) are cytoplasmic. A helical transmembrane segment spans residues 314–334 (NFIANTIFGTQSGLGALPITF). The Extracellular portion of the chain corresponds to 335–359 (DYTQVSQAMSGSVFATPFYVSANTY). The helical transmembrane segment at 360–380 (ASVLIFFVIVLPCLYFTNTWY) threads the bilayer. At 381–428 (AKYMPVISGSTYDNTQNKYNVTKILNEDYSINLEKYKEYSPVFVPFSY) the chain is on the cytoplasmic side. The helical transmembrane segment at 429 to 449 (LLSYALNFAAVIAVFVHCILY) threads the bilayer. The Extracellular portion of the chain corresponds to 450-482 (HGKDIVAKFKDRKNGGTDIHMRIYSKNYKDCPD). A helical transmembrane segment spans residues 483 to 503 (WWYLLLQIVMIGLGFVAVCCF). Residues 504–508 (DTKFP) lie on the Cytoplasmic side of the membrane. The chain crosses the membrane as a helical span at residues 509–529 (AWAFVIAILISLVNFIPQGIL). Topologically, residues 530 to 540 (EAMTNQHVGLN) are extracellular. A helical membrane pass occupies residues 541 to 561 (IITELICGYMLPLRPMANLLF). The Cytoplasmic segment spans residues 562-590 (KLYGFIVMRQGLNLSRDLKLAMYMKVSPR). Residues 591–611 (LIFAVQIYATIISGMVNVGVQ) form a helical membrane-spanning segment. Topologically, residues 612–659 (EWMMHNIDGLCTTDQPNGFTCANGRTVFNASIIWSLPKYLFSSGRIYN) are extracellular. N-linked (GlcNAc...) asparagine glycosylation is present at Asn-640. Residues 660-680 (PLMWFFLIGLLFPLAVYAVQW) form a helical membrane-spanning segment. At 681–736 (KFPKFKFAKHIHTPVFFTGPGNIPPSTPYNYSLFFAMSFCLNLIRKRWRAWFNKYN) the chain is on the cytoplasmic side. The helical transmembrane segment at 737-757 (FVMGAGVEAGVAISVVIIFLC) threads the bilayer. Topologically, residues 758-799 (VQYPGGKLSWWGNNVWKRTYDNDYKKFYTLKKGETFGYDKWW) are extracellular.

The protein belongs to the oligopeptide OPT transporter family.

The protein resides in the cell membrane. Its function is as follows. High affinity transporter for glutathione. Also transports tetra- and pentapeptides like the opioids leucine enkephalin (Tyr-Gly-Gly-Phe-Leu) and methionine enkephalin (Tyr-Gly-Gly_Phe-Met) across the cell membrane. The protein is Oligopeptide transporter 1 (OPT1) of Saccharomyces cerevisiae (strain ATCC 204508 / S288c) (Baker's yeast).